We begin with the raw amino-acid sequence, 375 residues long: Chaperone protein DnaJ (375 aa).

Residues aspartate 4–glycine 68 enclose the J domain. The CR-type zinc finger occupies glycine 134–threonine 216. 8 residues coordinate Zn(2+): cysteine 147, cysteine 150, cysteine 164, cysteine 167, cysteine 190, cysteine 193, cysteine 204, and cysteine 207. CXXCXGXG motif repeat units follow at residues cysteine 147–glycine 154, cysteine 164–glycine 171, cysteine 190–glycine 197, and cysteine 204–glycine 211.

Belongs to the DnaJ family. In terms of assembly, homodimer. Zn(2+) serves as cofactor.

The protein localises to the cytoplasm. Its function is as follows. Participates actively in the response to hyperosmotic and heat shock by preventing the aggregation of stress-denatured proteins and by disaggregating proteins, also in an autonomous, DnaK-independent fashion. Unfolded proteins bind initially to DnaJ; upon interaction with the DnaJ-bound protein, DnaK hydrolyzes its bound ATP, resulting in the formation of a stable complex. GrpE releases ADP from DnaK; ATP binding to DnaK triggers the release of the substrate protein, thus completing the reaction cycle. Several rounds of ATP-dependent interactions between DnaJ, DnaK and GrpE are required for fully efficient folding. Also involved, together with DnaK and GrpE, in the DNA replication of plasmids through activation of initiation proteins. The sequence is that of Chaperone protein DnaJ from Gloeothece citriformis (strain PCC 7424) (Cyanothece sp. (strain PCC 7424)).